Reading from the N-terminus, the 435-residue chain is Trigger factor (435 aa).

The PPIase FKBP-type domain occupies 161-246; sequence GDKLTLDFTG…IHKTEGPILP (86 aa).

Belongs to the FKBP-type PPIase family. Tig subfamily.

Its subcellular location is the cytoplasm. The catalysed reaction is [protein]-peptidylproline (omega=180) = [protein]-peptidylproline (omega=0). In terms of biological role, involved in protein export. Acts as a chaperone by maintaining the newly synthesized protein in an open conformation. Functions as a peptidyl-prolyl cis-trans isomerase. The sequence is that of Trigger factor from Colwellia psychrerythraea (strain 34H / ATCC BAA-681) (Vibrio psychroerythus).